The following is a 380-amino-acid chain: ATPase ASNA1 homolog (380 aa).

Residue 48–55 (KGGVGKTT) coordinates ATP. D77 is a catalytic residue. 2 residues coordinate ATP: E248 and N275.

This sequence belongs to the arsA ATPase family. In terms of assembly, homodimer.

It is found in the cytoplasm. The protein resides in the endoplasmic reticulum. ATPase required for the post-translational delivery of tail-anchored (TA) proteins to the endoplasmic reticulum. Recognizes and selectively binds the transmembrane domain of TA proteins in the cytosol. This complex then targets to the endoplasmic reticulum by membrane-bound receptors, where the tail-anchored protein is released for insertion. This process is regulated by ATP binding and hydrolysis. ATP binding drives the homodimer towards the closed dimer state, facilitating recognition of newly synthesized TA membrane proteins. ATP hydrolysis is required for insertion. Subsequently, the homodimer reverts towards the open dimer state, lowering its affinity for the membrane-bound receptor, and returning it to the cytosol to initiate a new round of targeting. This is ATPase ASNA1 homolog from Plasmodium yoelii yoelii.